Here is a 219-residue protein sequence, read N- to C-terminus: MRPSNALITPEGYPFIAYSAGLFLFLAGGAVLLKSVALAVPAAVTLLLVLFVISFFRNPERMPPADTALLVAPADGTVVYVGPATQEHLGACQKISIFMSVFNVHVNRAPISGTVVDRFYKQGKFYDARHADASCENEQCGLVMEQDNGVRVAFVQIAGLIARRILCYAEVGDRLERGQRYGMIRFGSRVDVYLPEGLESLVTVGQTTVAGETALVRLG.

S188 (schiff-base intermediate with substrate; via pyruvic acid) is an active-site residue. S188 is modified (pyruvic acid (Ser); by autocatalysis).

This sequence belongs to the phosphatidylserine decarboxylase family. PSD-A subfamily. As to quaternary structure, heterodimer of a large membrane-associated beta subunit and a small pyruvoyl-containing alpha subunit. The cofactor is pyruvate. In terms of processing, is synthesized initially as an inactive proenzyme. Formation of the active enzyme involves a self-maturation process in which the active site pyruvoyl group is generated from an internal serine residue via an autocatalytic post-translational modification. Two non-identical subunits are generated from the proenzyme in this reaction, and the pyruvate is formed at the N-terminus of the alpha chain, which is derived from the carboxyl end of the proenzyme. The post-translation cleavage follows an unusual pathway, termed non-hydrolytic serinolysis, in which the side chain hydroxyl group of the serine supplies its oxygen atom to form the C-terminus of the beta chain, while the remainder of the serine residue undergoes an oxidative deamination to produce ammonia and the pyruvoyl prosthetic group on the alpha chain.

Its subcellular location is the cell membrane. It carries out the reaction a 1,2-diacyl-sn-glycero-3-phospho-L-serine + H(+) = a 1,2-diacyl-sn-glycero-3-phosphoethanolamine + CO2. Its pathway is phospholipid metabolism; phosphatidylethanolamine biosynthesis; phosphatidylethanolamine from CDP-diacylglycerol: step 2/2. Catalyzes the formation of phosphatidylethanolamine (PtdEtn) from phosphatidylserine (PtdSer). This Trichlorobacter lovleyi (strain ATCC BAA-1151 / DSM 17278 / SZ) (Geobacter lovleyi) protein is Phosphatidylserine decarboxylase proenzyme.